Reading from the N-terminus, the 748-residue chain is Histone-lysine N-methyltransferase EZH2 (748 aa).

The segment covering 183 to 199 (DYEDDEDGEDNQDDERD) has biased composition (acidic residues). 2 disordered regions span residues 183-215 (DYEDDEDGEDNQDDERDDITKDQDDNMEEKETL) and 347-428 (TPPK…NIEP). The span at 200–215 (DITKDQDDNMEEKETL) shows a compositional bias: basic and acidic residues. Positions 348–359 (PPKRPSGRRRGR) are enriched in basic residues. The segment covering 376–387 (EAKDTDSDREAG) has biased composition (basic and acidic residues). Residues 505–607 (CRKIQLKKDG…SKNVSCKNCS (103 aa)) form the CXC domain. The region spanning 614 to 729 (KHLLLAPSDV…TGEELFFDYR (116 aa)) is the SET domain.

Belongs to the class V-like SAM-binding methyltransferase superfamily. Histone-lysine methyltransferase family. EZ subfamily. As to quaternary structure, component of the prc2/eed-ezh2 complex.

The protein localises to the nucleus. It catalyses the reaction L-lysyl(27)-[histone H3] + 3 S-adenosyl-L-methionine = N(6),N(6),N(6)-trimethyl-L-lysyl(27)-[histone H3] + 3 S-adenosyl-L-homocysteine + 3 H(+). Functionally, polycomb group (PcG) protein. Catalytic subunit of the prc2/eed-ezh2 complex, which methylates 'Lys-9' and 'Lys-27' of histone H3, leading to transcriptional repression of the affected target gene. May regulate the circadian clock via histone methylation at the promoter of the circadian genes. The polypeptide is Histone-lysine N-methyltransferase EZH2 (ezh2-b) (Xenopus laevis (African clawed frog)).